Reading from the N-terminus, the 1025-residue chain is Multidrug resistance protein MdtC (1025 aa).

12 consecutive transmembrane segments (helical) span residues 3-23, 333-353, 360-380, 387-407, 431-451, 463-483, 528-548, 853-873, 875-895, 897-917, 953-973, and 984-1004; these read FFAL…AITL, EVEQ…FLFL, IIPA…MYLC, LSLM…IVVL, VGFT…PLLL, FAVT…TLTP, LVGA…ISIP, VILI…LYES, VHPL…LLAL, LFNA…IGIV, PIMM…LSGG, and ITIV…TPVV.

It belongs to the resistance-nodulation-cell division (RND) (TC 2.A.6) family. MdtC subfamily. As to quaternary structure, part of a tripartite efflux system composed of MdtA, MdtB and MdtC. MdtC forms a heteromultimer with MdtB.

The protein resides in the cell inner membrane. The MdtABC tripartite complex confers resistance against novobiocin and deoxycholate. The sequence is that of Multidrug resistance protein MdtC from Escherichia coli O81 (strain ED1a).